We begin with the raw amino-acid sequence, 697 residues long: tRNA 5-methylaminomethyl-2-thiouridine biosynthesis bifunctional protein MnmC (697 aa).

The segment at M1–S272 is tRNA (mnm(5)s(2)U34)-methyltransferase. Positions I300 to I697 are FAD-dependent cmnm(5)s(2)U34 oxidoreductase.

It in the N-terminal section; belongs to the methyltransferase superfamily. tRNA (mnm(5)s(2)U34)-methyltransferase family. This sequence in the C-terminal section; belongs to the DAO family. FAD serves as cofactor.

Its subcellular location is the cytoplasm. It catalyses the reaction 5-aminomethyl-2-thiouridine(34) in tRNA + S-adenosyl-L-methionine = 5-methylaminomethyl-2-thiouridine(34) in tRNA + S-adenosyl-L-homocysteine + H(+). Functionally, catalyzes the last two steps in the biosynthesis of 5-methylaminomethyl-2-thiouridine (mnm(5)s(2)U) at the wobble position (U34) in tRNA. Catalyzes the FAD-dependent demodification of cmnm(5)s(2)U34 to nm(5)s(2)U34, followed by the transfer of a methyl group from S-adenosyl-L-methionine to nm(5)s(2)U34, to form mnm(5)s(2)U34. This is tRNA 5-methylaminomethyl-2-thiouridine biosynthesis bifunctional protein MnmC from Psychrobacter cryohalolentis (strain ATCC BAA-1226 / DSM 17306 / VKM B-2378 / K5).